Here is a 65-residue protein sequence, read N- to C-terminus: Bucain (65 aa).

Intrachain disulfides connect Cys3-Cys24, Cys17-Cys42, Cys46-Cys57, and Cys58-Cys63.

The protein belongs to the three-finger toxin family. Short-chain subfamily. Orphan group III sub-subfamily. As to expression, expressed by the venom gland.

The protein localises to the secreted. This chain is Bucain, found in Bungarus candidus (Malayan krait).